The following is a 141-amino-acid chain: MALERTLSIIKPDAVAKNVIGEIYSRFEKAGLKVVAAKYKQLSRREAEGFYAVHRERPFFNALVEFMISGPVMIQALEGENAVAAHRDLLGATNPKDAAPGTIRADFADSIDANAAHGSDSVENAANEVAYFFAATEVVSR.

6 residues coordinate ATP: K11, F59, R87, T93, R104, and N114. H117 acts as the Pros-phosphohistidine intermediate in catalysis.

It belongs to the NDK family. Homotetramer. Requires Mg(2+) as cofactor.

Its subcellular location is the cytoplasm. The enzyme catalyses a 2'-deoxyribonucleoside 5'-diphosphate + ATP = a 2'-deoxyribonucleoside 5'-triphosphate + ADP. The catalysed reaction is a ribonucleoside 5'-diphosphate + ATP = a ribonucleoside 5'-triphosphate + ADP. In terms of biological role, major role in the synthesis of nucleoside triphosphates other than ATP. The ATP gamma phosphate is transferred to the NDP beta phosphate via a ping-pong mechanism, using a phosphorylated active-site intermediate. This is Nucleoside diphosphate kinase from Xanthomonas axonopodis pv. citri (strain 306).